The primary structure comprises 315 residues: Glycine--tRNA ligase alpha subunit (315 aa).

This sequence belongs to the class-II aminoacyl-tRNA synthetase family. In terms of assembly, tetramer of two alpha and two beta subunits.

The protein localises to the cytoplasm. The catalysed reaction is tRNA(Gly) + glycine + ATP = glycyl-tRNA(Gly) + AMP + diphosphate. In Pseudomonas aeruginosa (strain LESB58), this protein is Glycine--tRNA ligase alpha subunit.